Reading from the N-terminus, the 694-residue chain is Methionine--tRNA ligase (694 aa).

Residues 14-24 (PYANGPIHLGH) carry the 'HIGH' region motif. Residues cysteine 145, cysteine 148, cysteine 158, and cysteine 161 each contribute to the Zn(2+) site. The short motif at 330 to 334 (KMSKS) is the 'KMSKS' region element. Position 333 (lysine 333) interacts with ATP. The disordered stretch occupies residues 558 to 579 (SLQATAGQPEPHSQVRHAEHQQ). The tRNA-binding domain maps to 593–694 (DFAKVDLRIA…EGAQPGMKVK (102 aa)).

This sequence belongs to the class-I aminoacyl-tRNA synthetase family. MetG type 1 subfamily. As to quaternary structure, homodimer. It depends on Zn(2+) as a cofactor.

The protein resides in the cytoplasm. The enzyme catalyses tRNA(Met) + L-methionine + ATP = L-methionyl-tRNA(Met) + AMP + diphosphate. Its function is as follows. Is required not only for elongation of protein synthesis but also for the initiation of all mRNA translation through initiator tRNA(fMet) aminoacylation. The sequence is that of Methionine--tRNA ligase from Methylococcus capsulatus (strain ATCC 33009 / NCIMB 11132 / Bath).